A 327-amino-acid chain; its full sequence is DNA-directed RNA polymerase subunit alpha (327 aa).

The alpha N-terminal domain (alpha-NTD) stretch occupies residues 1–233; sequence MVREKVKVST…NLFIPFLHVE (233 aa). Positions 264-327 are alpha C-terminal domain (alpha-CTD); sequence TKELAFQYIF…KKILDILEKK (64 aa).

Belongs to the RNA polymerase alpha chain family. In plastids the minimal PEP RNA polymerase catalytic core is composed of four subunits: alpha, beta, beta', and beta''. When a (nuclear-encoded) sigma factor is associated with the core the holoenzyme is formed, which can initiate transcription.

The protein localises to the plastid. It is found in the chloroplast. The enzyme catalyses RNA(n) + a ribonucleoside 5'-triphosphate = RNA(n+1) + diphosphate. Its function is as follows. DNA-dependent RNA polymerase catalyzes the transcription of DNA into RNA using the four ribonucleoside triphosphates as substrates. The polypeptide is DNA-directed RNA polymerase subunit alpha (Capsella bursa-pastoris (Shepherd's purse)).